We begin with the raw amino-acid sequence, 229 residues long: 7-cyano-7-deazaguanine synthase (229 aa).

Residue 8 to 18 (FSGGQDSTTCL) participates in ATP binding. Positions 186, 195, 198, and 201 each coordinate Zn(2+).

Belongs to the QueC family. Zn(2+) serves as cofactor.

The enzyme catalyses 7-carboxy-7-deazaguanine + NH4(+) + ATP = 7-cyano-7-deazaguanine + ADP + phosphate + H2O + H(+). It functions in the pathway purine metabolism; 7-cyano-7-deazaguanine biosynthesis. In terms of biological role, catalyzes the ATP-dependent conversion of 7-carboxy-7-deazaguanine (CDG) to 7-cyano-7-deazaguanine (preQ(0)). The protein is 7-cyano-7-deazaguanine synthase of Edwardsiella ictaluri (strain 93-146).